The following is a 275-amino-acid chain: 3-methyl-2-oxobutanoate hydroxymethyltransferase (275 aa).

Mg(2+) is bound by residues Asp-51 and Asp-90. 3-methyl-2-oxobutanoate-binding positions include 51–52 (DS), Asp-90, and Lys-120. Glu-122 serves as a coordination point for Mg(2+). The active-site Proton acceptor is Glu-189.

Belongs to the PanB family. As to quaternary structure, homodecamer; pentamer of dimers. Requires Mg(2+) as cofactor.

It localises to the cytoplasm. It carries out the reaction 3-methyl-2-oxobutanoate + (6R)-5,10-methylene-5,6,7,8-tetrahydrofolate + H2O = 2-dehydropantoate + (6S)-5,6,7,8-tetrahydrofolate. It participates in cofactor biosynthesis; (R)-pantothenate biosynthesis; (R)-pantoate from 3-methyl-2-oxobutanoate: step 1/2. Catalyzes the reversible reaction in which hydroxymethyl group from 5,10-methylenetetrahydrofolate is transferred onto alpha-ketoisovalerate to form ketopantoate. The sequence is that of 3-methyl-2-oxobutanoate hydroxymethyltransferase from Phenylobacterium zucineum (strain HLK1).